Reading from the N-terminus, the 440-residue chain is Ribosomal protein uS12 methylthiotransferase RimO (440 aa).

Residues 6 to 116 (PKVGFVSLGC…VVTAVHEVVP (111 aa)) enclose the MTTase N-terminal domain. [4Fe-4S] cluster is bound by residues Cys15, Cys51, Cys80, Cys149, Cys153, and Cys156. The 239-residue stretch at 135–373 (LTPRHYAYLK…MAHQQAISAA (239 aa)) folds into the Radical SAM core domain. Residues 376–440 (QLKVGKEIEV…DEYDLWAELV (65 aa)) form the TRAM domain.

This sequence belongs to the methylthiotransferase family. RimO subfamily. The cofactor is [4Fe-4S] cluster.

Its subcellular location is the cytoplasm. The catalysed reaction is L-aspartate(89)-[ribosomal protein uS12]-hydrogen + (sulfur carrier)-SH + AH2 + 2 S-adenosyl-L-methionine = 3-methylsulfanyl-L-aspartate(89)-[ribosomal protein uS12]-hydrogen + (sulfur carrier)-H + 5'-deoxyadenosine + L-methionine + A + S-adenosyl-L-homocysteine + 2 H(+). Functionally, catalyzes the methylthiolation of an aspartic acid residue of ribosomal protein uS12. In Pseudomonas aeruginosa (strain ATCC 15692 / DSM 22644 / CIP 104116 / JCM 14847 / LMG 12228 / 1C / PRS 101 / PAO1), this protein is Ribosomal protein uS12 methylthiotransferase RimO.